Here is an 825-residue protein sequence, read N- to C-terminus: E3 ubiquitin-protein ligase ICP0 (825 aa).

Over residues 1-10 the composition is skewed to polar residues; it reads MEPRPGTSSR. The segment at 1–121 is disordered; the sequence is MEPRPGTSSR…VGEEEAEAGG (121 aa). Positions 46-57 are enriched in acidic residues; the sequence is DSEEETEVGISD. The RING-type zinc finger occupies 126–167; it reads CAVCTDEIAPPLRCQSFPCLHPFCIPCMKTWIPLRNTCPLCN. Disordered stretches follow at residues 221 to 312, 325 to 683, and 803 to 825; these read RSLS…GGGP, PPAA…PAPG, and RHPW…GHGE. The segment covering 242-251 has biased composition (acidic residues); sequence TDDEDDDLAD. 3 stretches are compositionally biased toward low complexity: residues 273 to 283, 290 to 303, and 350 to 367; these read TRGTSQPAATR, PRSS…LRAG, and PPAR…VISD. The span at 368-379 shows a compositional bias: pro residues; that stretch reads SPPPSPRRPAGP. Low complexity-rich tracts occupy residues 380 to 394 and 402 to 439; these read GPLS…QVSS and PQSS…DAAG. The segment covering 456 to 468 has biased composition (polar residues); the sequence is RMTQAQTDTQAQS. Positions 479-491 are enriched in gly residues; that stretch reads GSGGPGAEGGPGV. Low complexity-rich tracts occupy residues 492–510 and 519–540; these read PRGT…GAAA and DSGP…PLAP. Residues 552 to 563 are compositionally biased toward basic and acidic residues; sequence RAPDSDSGDRGH. A compositionally biased stretch (low complexity) spans 567–641; it reads APASAGAAPP…GGSVASASGA (75 aa). Over residues 658–667 the composition is skewed to basic residues; the sequence is GPRKCARKTR. A compositionally biased stretch (low complexity) spans 811-825; sequence GAPAPAGDAPAGHGE.

Auto-ubiquitinated.

The enzyme catalyses S-ubiquitinyl-[E2 ubiquitin-conjugating enzyme]-L-cysteine + [acceptor protein]-L-lysine = [E2 ubiquitin-conjugating enzyme]-L-cysteine + N(6)-ubiquitinyl-[acceptor protein]-L-lysine.. In terms of biological role, evades nuclear antiviral defenses triggered by dsDNA viruses. Acts during the initial stages of lytic infection and the reactivation of latent viral genome. Prevents the antiviral effect of nuclear bodies by degrading host PML and SP100. Prevents antiviral response to viral DNA induced by IFI16 by degrading it. Additionally, inhibits host IRF3 nuclear signaling to prevent interferon production by the infected cells. This Homo sapiens (Human) protein is E3 ubiquitin-protein ligase ICP0 (RL2).